The chain runs to 351 residues: Protein-glutamate methylesterase/protein-glutamine glutaminase (351 aa).

The region spanning 3–120 is the Response regulatory domain; the sequence is KTLVVDDSAL…EISKIENELV (118 aa). The residue at position 54 (D54) is a 4-aspartylphosphate. The CheB-type methylesterase domain maps to 160–347; the sequence is ILIGSSTGGP…EQIVRMIEVK (188 aa). Residues S165, H192, and D289 contribute to the active site.

It belongs to the CheB family. Post-translationally, phosphorylated by CheA. Phosphorylation of the N-terminal regulatory domain activates the methylesterase activity.

The protein resides in the cytoplasm. It catalyses the reaction [protein]-L-glutamate 5-O-methyl ester + H2O = L-glutamyl-[protein] + methanol + H(+). The catalysed reaction is L-glutaminyl-[protein] + H2O = L-glutamyl-[protein] + NH4(+). In terms of biological role, involved in chemotaxis. Part of a chemotaxis signal transduction system that modulates chemotaxis in response to various stimuli. Catalyzes the demethylation of specific methylglutamate residues introduced into the chemoreceptors (methyl-accepting chemotaxis proteins or MCP) by CheR. Also mediates the irreversible deamidation of specific glutamine residues to glutamic acid. In Methanococcoides burtonii (strain DSM 6242 / NBRC 107633 / OCM 468 / ACE-M), this protein is Protein-glutamate methylesterase/protein-glutamine glutaminase.